We begin with the raw amino-acid sequence, 517 residues long: Putative alpha-L-fucosidase 1 (517 aa).

Residues 1 to 20 form the signal peptide; the sequence is MATILLLLLGLLVGLPLLRA. N-linked (GlcNAc...) asparagine glycans are attached at residues Asn-119, Asn-249, Asn-296, Asn-321, Asn-352, Asn-496, and Asn-511.

The protein belongs to the glycosyl hydrolase 29 family.

The protein resides in the secreted. It localises to the extracellular space. The protein localises to the apoplast. The catalysed reaction is an alpha-L-fucoside + H2O = L-fucose + an alcohol. Its function is as follows. Alpha-L-fucosidase is responsible for hydrolyzing the alpha-1,6-linked fucose joined to the reducing-end N-acetylglucosamine of the carbohydrate moieties of glycoproteins. Active only against 2'-fucosyl-lactitol when heterologously expressed. The chain is Putative alpha-L-fucosidase 1 from Oryza sativa subsp. japonica (Rice).